A 243-amino-acid polypeptide reads, in one-letter code: Geranylgeranylglyceryl phosphate synthase (243 aa).

Positions 22 and 51 each coordinate Mg(2+). Sn-glycerol 1-phosphate-binding positions include 170–176 (YLESGSG), 201–202 (GG), and 223–224 (GT).

It belongs to the GGGP/HepGP synthase family. Group II subfamily. Mg(2+) is required as a cofactor.

It localises to the cytoplasm. The enzyme catalyses sn-glycerol 1-phosphate + (2E,6E,10E)-geranylgeranyl diphosphate = sn-3-O-(geranylgeranyl)glycerol 1-phosphate + diphosphate. It participates in membrane lipid metabolism; glycerophospholipid metabolism. In terms of biological role, prenyltransferase that catalyzes the transfer of the geranylgeranyl moiety of geranylgeranyl diphosphate (GGPP) to the C3 hydroxyl of sn-glycerol-1-phosphate (G1P). This reaction is the first ether-bond-formation step in the biosynthesis of archaeal membrane lipids. The protein is Geranylgeranylglyceryl phosphate synthase of Picrophilus torridus (strain ATCC 700027 / DSM 9790 / JCM 10055 / NBRC 100828 / KAW 2/3).